A 194-amino-acid polypeptide reads, in one-letter code: dCTP deaminase (194 aa).

Residues Arg110–Arg115, Asp128, Val136–Glu138, Tyr171, Lys178, and Gln182 contribute to the dCTP site. The Proton donor/acceptor role is filled by Glu138. The interval Ser173–Arg194 is disordered. Residues Lys180–Arg194 are compositionally biased toward polar residues.

Belongs to the dCTP deaminase family. Homotrimer.

The catalysed reaction is dCTP + H2O + H(+) = dUTP + NH4(+). The protein operates within pyrimidine metabolism; dUMP biosynthesis; dUMP from dCTP (dUTP route): step 1/2. Functionally, catalyzes the deamination of dCTP to dUTP. In Actinobacillus succinogenes (strain ATCC 55618 / DSM 22257 / CCUG 43843 / 130Z), this protein is dCTP deaminase.